Consider the following 264-residue polypeptide: Tryptophan synthase alpha chain (264 aa).

Residues glutamate 49 and aspartate 60 each act as proton acceptor in the active site.

Belongs to the TrpA family. Tetramer of two alpha and two beta chains.

The catalysed reaction is (1S,2R)-1-C-(indol-3-yl)glycerol 3-phosphate + L-serine = D-glyceraldehyde 3-phosphate + L-tryptophan + H2O. The protein operates within amino-acid biosynthesis; L-tryptophan biosynthesis; L-tryptophan from chorismate: step 5/5. The alpha subunit is responsible for the aldol cleavage of indoleglycerol phosphate to indole and glyceraldehyde 3-phosphate. The polypeptide is Tryptophan synthase alpha chain (Lachnospira eligens (strain ATCC 27750 / DSM 3376 / VPI C15-48 / C15-B4) (Eubacterium eligens)).